A 301-amino-acid polypeptide reads, in one-letter code: tRNA dimethylallyltransferase (301 aa).

10 to 17 (GATATGKT) serves as a coordination point for ATP. 12-17 (TATGKT) contacts substrate. The segment at 35-38 (DSRQ) is interaction with substrate tRNA.

Belongs to the IPP transferase family. In terms of assembly, monomer. Mg(2+) serves as cofactor.

It carries out the reaction adenosine(37) in tRNA + dimethylallyl diphosphate = N(6)-dimethylallyladenosine(37) in tRNA + diphosphate. In terms of biological role, catalyzes the transfer of a dimethylallyl group onto the adenine at position 37 in tRNAs that read codons beginning with uridine, leading to the formation of N6-(dimethylallyl)adenosine (i(6)A). The polypeptide is tRNA dimethylallyltransferase (Crocosphaera subtropica (strain ATCC 51142 / BH68) (Cyanothece sp. (strain ATCC 51142))).